Here is a 165-residue protein sequence, read N- to C-terminus: P2Y purinoceptor 4 (165 aa).

A helical membrane pass occupies residues 1–16 (SDTLYVLSLPTLVYYY). Topologically, residues 17–30 (AARNHWPFGTGFCK) are extracellular. A helical transmembrane segment spans residues 31-51 (FVRFLFYWNLYCSVLFLTCIS). The Cytoplasmic portion of the chain corresponds to 52–74 (VHRYMGICHPLRALRWGRPRFAS). Residues 75-95 (LLCLAVWLVVAGCLVPNLFFV) form a helical membrane-spanning segment. The Extracellular segment spans residues 96 to 124 (TTSPNGTTILCHDTTRPEEFDHYVHFSSA). Asparagine 100 carries N-linked (GlcNAc...) asparagine glycosylation. Residues 125–145 (VMVLLFGLPFLVTLVCYGLMA) form a helical membrane-spanning segment. At 146–165 (RRLYRPLPGAGQSSSRLRSL) the chain is on the cytoplasmic side.

It belongs to the G-protein coupled receptor 1 family.

It localises to the cell membrane. Its function is as follows. Receptor for UTP and UDP coupled to G-proteins that activate a phosphatidylinositol-calcium second messenger system. This is P2Y purinoceptor 4 (P2RY4) from Cricetulus griseus (Chinese hamster).